A 163-amino-acid chain; its full sequence is MADSSFDIVSKIDRQEVDNALGQTAREIATRFDFKGTGASIEWQGEHAIEISASADDRASAVLDVFKTKLVKRDVSLKVLDASEPRQSGQQSKIAIALKEGISSEDAKKISKLIRDEGPKGVKAQIQGDELRVSSKKRDDLQAVIALVKQQDYDFAVQFTNYR.

Belongs to the YajQ family.

Functionally, nucleotide-binding protein. The protein is Nucleotide-binding protein Noca_0564 of Nocardioides sp. (strain ATCC BAA-499 / JS614).